The following is a 91-amino-acid chain: Small ribosomal subunit protein uS19m (91 aa).

It belongs to the universal ribosomal protein uS19 family. In terms of assembly, component of the mitochondrial small ribosomal subunit (mt-SSU). Mature N.crassa 74S mitochondrial ribosomes consist of a small (37S) and a large (54S) subunit. The 37S small subunit contains a 16S ribosomal RNA (16S mt-rRNA) and 32 different proteins. The 54S large subunit contains a 23S rRNA (23S mt-rRNA) and 42 different proteins.

Its subcellular location is the mitochondrion. Its function is as follows. Component of the mitochondrial ribosome (mitoribosome), a dedicated translation machinery responsible for the synthesis of mitochondrial genome-encoded proteins, including at least some of the essential transmembrane subunits of the mitochondrial respiratory chain. The mitoribosomes are attached to the mitochondrial inner membrane and translation products are cotranslationally integrated into the membrane. This Neurospora crassa (strain ATCC 24698 / 74-OR23-1A / CBS 708.71 / DSM 1257 / FGSC 987) protein is Small ribosomal subunit protein uS19m (rsm19).